The chain runs to 369 residues: Tetraacyldisaccharide 4'-kinase (369 aa).

68 to 75 is a binding site for ATP; it reads VVGGTGKT.

This sequence belongs to the LpxK family.

It carries out the reaction a lipid A disaccharide + ATP = a lipid IVA + ADP + H(+). It functions in the pathway glycolipid biosynthesis; lipid IV(A) biosynthesis; lipid IV(A) from (3R)-3-hydroxytetradecanoyl-[acyl-carrier-protein] and UDP-N-acetyl-alpha-D-glucosamine: step 6/6. Its function is as follows. Transfers the gamma-phosphate of ATP to the 4'-position of a tetraacyldisaccharide 1-phosphate intermediate (termed DS-1-P) to form tetraacyldisaccharide 1,4'-bis-phosphate (lipid IVA). This Chlamydia muridarum (strain MoPn / Nigg) protein is Tetraacyldisaccharide 4'-kinase.